Reading from the N-terminus, the 713-residue chain is MSPSAVQSSKLEEQSSEIDKLKAKMSQSAATAQQKKEHEYEHLTSVKIVPQRPISDRLQPAIATHYSPHLDGLQDYQRLHKESIEDPAKFFGSKATQFLNWSKPFDKVFIPDPKTGRPSFQNNAWFLNGQLNACYNCVDRHALKTPNKKAIIFEGDEPGQGYSITYKELLEEVCQVAQVLTYSMGVRKGDTVAVYMPMVPEAIITLLAISRIGAIHSVVFAGFSSNSLRDRINDGDSKVVITTDESNRGGKVIETKRIVDDALRETPGVRHVLVYRKTNNPSVAFHAPRDLDWATEKKKYKTYYPCTPVDSEDPLFLLYTSGSTGAPKGVQHSTAGYLLGALLTMRYTFDTHQEDVFFTAGDIGWITGHTYVVYGPLLYGCATLVFEGTPAYPNYSRYWDIIDEHKVTQFYVAPTALRLLKRAGDSYIENHSLKSLRCLGSVGEPIAAEVWEWYSEKIGKNEIPIVDTYWQTESGSHLVTPLAGGVTPMKPGSASFPFFGIDAVVLDPNTGEELNTSHAEGVLAVKAAWPSFARTIWKNHDRYLDTYLNPYPGYYFTGDGAAKDKDGYIWILGRVDDVVNVSGHRLSTAEIEAAIIEDPIVAECAVVGFNDDLTGQAVAAFVVLKNKSSWSTATDDELQDIKKHLVFTVRKDIGPFAAPKLIILVDDLPKTRSGKIMRRILRKILAGESDQLGDVSTLSNPGIVRHLIDSVKL.

The disordered stretch occupies residues 1 to 39 (MSPSAVQSSKLEEQSSEIDKLKAKMSQSAATAQQKKEHE). The span at 10-22 (KLEEQSSEIDKLK) shows a compositional bias: basic and acidic residues. CoA contacts are provided by residues 248–251 (RGGK) and threonine 367. Residues 443 to 445 (GEP), 467 to 472 (DTYWQT), aspartate 559, and arginine 574 each bind ATP. Positions 552 to 600 (PGYYFTGDGAAKDKDGYIWILGRVDDVVNVSGHRLSTAEIEAAIIEDPI) match the FACS motif. Serine 582 serves as a coordination point for CoA. Arginine 585 lines the ATP pocket. Arginine 650 lines the CoA pocket. The Microbody targeting signal signature appears at 711–713 (VKL).

This sequence belongs to the ATP-dependent AMP-binding enzyme family.

Its subcellular location is the microsome. The protein resides in the cytoplasm. It localises to the mitochondrion. The protein localises to the nucleus. The enzyme catalyses acetate + ATP + CoA = acetyl-CoA + AMP + diphosphate. Its function is as follows. Catalyzes the production of acetyl-CoA. Provides the acetyl-CoA source for histone acetylation in the nucleus. 'Aerobic' isozyme of acetyl-coenzyme A synthetase, which supports growth on nonfermentable carbon sources such as glycerol and ethanol. May be required for assimilation of ethanol and acetate. The polypeptide is Acetyl-coenzyme A synthetase 1 (ACS1) (Saccharomyces cerevisiae (strain ATCC 204508 / S288c) (Baker's yeast)).